A 205-amino-acid polypeptide reads, in one-letter code: Adenylyl-sulfate kinase (205 aa).

An ATP-binding site is contributed by 31 to 38 (GLSGAGKS). Catalysis depends on S105, which acts as the Phosphoserine intermediate.

Belongs to the APS kinase family.

It carries out the reaction adenosine 5'-phosphosulfate + ATP = 3'-phosphoadenylyl sulfate + ADP + H(+). The protein operates within sulfur metabolism; hydrogen sulfide biosynthesis; sulfite from sulfate: step 2/3. In terms of biological role, catalyzes the synthesis of activated sulfate. The protein is Adenylyl-sulfate kinase of Shewanella baltica (strain OS155 / ATCC BAA-1091).